We begin with the raw amino-acid sequence, 500 residues long: MENLKYVLEMENISKEFPGVKALDDVQLKLKPGTVHALMGENGAGKSTLMKCLFGIYEKNSGKILLDGVEVNFKSTKEALENGVSMVHQELNQVLQRNVLDNIWLGRYPMKGFFVDEKKMYNDTINIFKDLDIKVDPRKKVADLPIAERQMIEIAKAVSYKSKVIVMDEPTSSLTEKEVDHLFRIIKKLKESGVGIIYISHKMEEIKMISDEITILRDGKWISTNDVSKISTEQIISMMVGRDLTERFPKKDNKAKEMILEVKNLTALNQPSIQDVSFELYKGEILGIAGLVGSKRTEIVETIFGMRPKKHGEIILNGKTVKNKSPEDAIKNGFALVTEERRSTGIFSMLDVAFNSVISNLDRYKNKFRLLKNKDIEKDTKWIVDSMRVKTPSYSTKIGSLSGGNQQKVIIGRWLLTEPEVLMLDEPTRGIDVLAKYEIYQLMIDLAKKDKGIIMISSEMPELLGVTDRILVMSNGRVAGIVKTSETNQEEIMELSAKYL.

2 ABC transporter domains span residues 8-243 and 257-500; these read LEME…VGRD and EMIL…AKYL. Residue 40 to 47 coordinates ATP; it reads GENGAGKS.

The protein belongs to the ABC transporter superfamily. Galactose/methyl galactoside importer (TC 3.A.1.2.3) family. In terms of assembly, the complex is composed of one ATP-binding protein (MglA), two transmembrane proteins (MglC) and a solute-binding protein (MglB).

The protein resides in the cell inner membrane. The catalysed reaction is D-galactose(out) + ATP + H2O = D-galactose(in) + ADP + phosphate + H(+). The enzyme catalyses methyl beta-D-galactoside(out) + ATP + H2O = methyl beta-D-galactoside(in) + ADP + phosphate + H(+). Functionally, part of the ABC transporter complex MglABC involved in galactose/methyl galactoside import. Responsible for energy coupling to the transport system. The polypeptide is Galactose/methyl galactoside import ATP-binding protein MglA (Fusobacterium nucleatum subsp. nucleatum (strain ATCC 25586 / DSM 15643 / BCRC 10681 / CIP 101130 / JCM 8532 / KCTC 2640 / LMG 13131 / VPI 4355)).